Here is a 248-residue protein sequence, read N- to C-terminus: DNA polymerase sliding clamp 2 (248 aa).

The protein belongs to the PCNA family. The subunits circularize to form a toroid; DNA passes through its center. Replication factor C (RFC) is required to load the toroid on the DNA. Forms a dimeric complex with PCNA3 and trimeric complexes PCNA123 and PCNA323; does not form homotrimers. Crystal structures show a heterotetramer of 2 PCNA2 and 2 PCNA3, which would be large enough to clamp a Holliday junction.

In terms of biological role, sliding clamp subunit that acts as a moving platform for DNA processing. Responsible for tethering the catalytic subunit of DNA polymerase and other proteins to DNA during high-speed replication. Both trimeric complexes inhibit DNA ligase and both 3'-5' and 5'-3' activity of Hel308 (Hjm) helicase, but stimulate Hjc, the Holliday junction cleavage enzyme. This Sulfurisphaera tokodaii (strain DSM 16993 / JCM 10545 / NBRC 100140 / 7) (Sulfolobus tokodaii) protein is DNA polymerase sliding clamp 2.